The following is a 207-amino-acid chain: Phenazine biosynthesis protein PhzD (207 aa).

Asp-38 functions as the Proton donor in the catalytic mechanism. Substrate is bound by residues Gln-78, Arg-87, Lys-122, and 151–155 (YAHVG).

The protein belongs to the isochorismatase family. In terms of assembly, homodimer.

The enzyme catalyses (2S)-2-amino-4-deoxychorismate + H2O = (5S,6S)-6-amino-5-hydroxycyclohexa-1,3-diene-1-carboxyate + pyruvate. Its pathway is antibiotic biosynthesis; phenazine biosynthesis. Functionally, involved in the biosynthesis of the antibiotic phenazine, a nitrogen-containing heterocyclic molecule having important roles in virulence, competition and biological control. Catalyzes the hydrolysis of the vinyl ether functional group of 2-amino-2-deoxyisochorismate (ADIC), yielding pyruvate and trans-2,3-dihydro-3-hydroxyanthranilic acid (DHHA). The chain is Phenazine biosynthesis protein PhzD from Pseudomonas fluorescens.